Reading from the N-terminus, the 242-residue chain is Protein ABHD14A (242 aa).

The helical; Signal-anchor for type II membrane protein transmembrane segment at A6–P26 threads the bilayer. A glycan (N-linked (GlcNAc...) asparagine) is linked at N38. Active-site charge relay system residues include S142, D193, and H220.

Belongs to the AB hydrolase superfamily. ABHD14 family.

It localises to the cytoplasm. The protein resides in the membrane. In terms of biological role, possible role in granule neuron development. This chain is Protein ABHD14A, found in Rattus norvegicus (Rat).